We begin with the raw amino-acid sequence, 392 residues long: Nicotinate phosphoribosyltransferase (392 aa).

Histidine 214 bears the Phosphohistidine; by autocatalysis mark.

Belongs to the NAPRTase family. In terms of processing, transiently phosphorylated on a His residue during the reaction cycle. Phosphorylation strongly increases the affinity for substrates and increases the rate of nicotinate D-ribonucleotide production. Dephosphorylation regenerates the low-affinity form of the enzyme, leading to product release.

The catalysed reaction is nicotinate + 5-phospho-alpha-D-ribose 1-diphosphate + ATP + H2O = nicotinate beta-D-ribonucleotide + ADP + phosphate + diphosphate. The protein operates within cofactor biosynthesis; NAD(+) biosynthesis; nicotinate D-ribonucleotide from nicotinate: step 1/1. Functionally, catalyzes the synthesis of beta-nicotinate D-ribonucleotide from nicotinate and 5-phospho-D-ribose 1-phosphate at the expense of ATP. The polypeptide is Nicotinate phosphoribosyltransferase (Xanthomonas euvesicatoria pv. vesicatoria (strain 85-10) (Xanthomonas campestris pv. vesicatoria)).